The chain runs to 210 residues: MAEQSSRNLDTGRAGIILAGGRSRRFDGIDKATAPVGGRPMIHRVAASLDPAVDELVINCRADQRDTFAAALSDFDVRFAEDSHPDHGPVFGLRTAVRASNAEYAAILPCDMPLVPTGFISHLFGRVQGGTGVIPSVSETPVPLPSVVHCRAGEVACTETIRAGSDRLKDVMSTLGVNVLDGREVQAHAGLDAFSNVNTIDDLRALSSRR.

GTP contacts are provided by residues 18–20 (LAG), K31, N59, D86, and D111. Position 111 (D111) interacts with Mg(2+).

It belongs to the MobA family. Mg(2+) serves as cofactor.

The protein resides in the cytoplasm. The enzyme catalyses Mo-molybdopterin + GTP + H(+) = Mo-molybdopterin guanine dinucleotide + diphosphate. In terms of biological role, transfers a GMP moiety from GTP to Mo-molybdopterin (Mo-MPT) cofactor (Moco or molybdenum cofactor) to form Mo-molybdopterin guanine dinucleotide (Mo-MGD) cofactor. The sequence is that of Probable molybdenum cofactor guanylyltransferase (nasC) from Haloferax mediterranei (strain ATCC 33500 / DSM 1411 / JCM 8866 / NBRC 14739 / NCIMB 2177 / R-4) (Halobacterium mediterranei).